The chain runs to 107 residues: Envelope small membrane protein (107 aa).

At M1–E11 the chain is on the virion surface side. The chain crosses the membrane as a helical span at residues N12 to G32. Over R33 to S107 the chain is Intravirion.

The protein belongs to the gammacoronaviruses E protein family. Homooligomer. Interacts with the M membrane protein in the budding compartment of the host cell, which is located between endoplasmic reticulum and the Golgi complex. The cytoplasmic tails of both proteins are important for this function. Interacts with Nucleoprotein.

The protein localises to the host Golgi apparatus membrane. Plays a central role in virus morphogenesis and assembly. Acts as a viroporin and self-assembles in host membranes forming pentameric protein-lipid pores that allow ion transport. Also plays a role in the induction of apoptosis. This chain is Envelope small membrane protein, found in Gallus gallus (Chicken).